We begin with the raw amino-acid sequence, 315 residues long: Carbamate kinase (315 aa).

Belongs to the carbamate kinase family. Homodimer.

It is found in the cytoplasm. It carries out the reaction hydrogencarbonate + NH4(+) + ATP = carbamoyl phosphate + ADP + H2O + H(+). This Thermococcus kodakarensis (strain ATCC BAA-918 / JCM 12380 / KOD1) (Pyrococcus kodakaraensis (strain KOD1)) protein is Carbamate kinase (cpkA).